The chain runs to 274 residues: Isoprenyl transferase (274 aa).

Aspartate 49 is an active-site residue. Aspartate 49 provides a ligand contact to Mg(2+). Residues 50–53, phenylalanine 54, arginine 62, histidine 66, and 94–96 each bind substrate; these read GNRR and STD. Catalysis depends on asparagine 97, which acts as the Proton acceptor. Substrate-binding positions include arginine 100, arginine 223, and 229–231; that span reads RLS. Position 242 (glutamate 242) interacts with Mg(2+).

It belongs to the UPP synthase family. As to quaternary structure, homodimer. It depends on Mg(2+) as a cofactor.

Functionally, catalyzes the condensation of isopentenyl diphosphate (IPP) with allylic pyrophosphates generating different type of terpenoids. This chain is Isoprenyl transferase, found in Deinococcus radiodurans (strain ATCC 13939 / DSM 20539 / JCM 16871 / CCUG 27074 / LMG 4051 / NBRC 15346 / NCIMB 9279 / VKM B-1422 / R1).